The sequence spans 173 residues: NADH-quinone oxidoreductase subunit I 2 (173 aa).

4Fe-4S ferredoxin-type domains are found at residues 41-73 (IVLTRDPDGQERCVACNLCATVCPVGCIDLAKA) and 83-112 (EYFRVNFARCIFCGFCEDACPTAAIQLTPD). The [4Fe-4S] cluster site is built by C53, C56, C59, C63, C92, C95, C98, and C102. Over residues 153-163 (GKDKGEAEHEA) the composition is skewed to basic and acidic residues. The interval 153 to 173 (GKDKGEAEHEAPPVNLKGLLP) is disordered.

This sequence belongs to the complex I 23 kDa subunit family. NDH-1 is composed of 14 different subunits. Subunits NuoA, H, J, K, L, M, N constitute the membrane sector of the complex. [4Fe-4S] cluster serves as cofactor.

The protein localises to the cell inner membrane. It catalyses the reaction a quinone + NADH + 5 H(+)(in) = a quinol + NAD(+) + 4 H(+)(out). Its function is as follows. NDH-1 shuttles electrons from NADH, via FMN and iron-sulfur (Fe-S) centers, to quinones in the respiratory chain. The immediate electron acceptor for the enzyme in this species is believed to be ubiquinone. Couples the redox reaction to proton translocation (for every two electrons transferred, four hydrogen ions are translocated across the cytoplasmic membrane), and thus conserves the redox energy in a proton gradient. The protein is NADH-quinone oxidoreductase subunit I 2 of Rhodopseudomonas palustris (strain ATCC BAA-98 / CGA009).